The following is a 333-amino-acid chain: Adenosine deaminase (333 aa).

Zn(2+) is bound by residues H12 and H14. Substrate contacts are provided by H14, D16, and G170. Position 197 (H197) interacts with Zn(2+). The active-site Proton donor is the E200. Position 278 (D278) interacts with Zn(2+). D279 is a binding site for substrate.

The protein belongs to the metallo-dependent hydrolases superfamily. Adenosine and AMP deaminases family. Adenosine deaminase subfamily. Zn(2+) serves as cofactor.

It carries out the reaction adenosine + H2O + H(+) = inosine + NH4(+). The catalysed reaction is 2'-deoxyadenosine + H2O + H(+) = 2'-deoxyinosine + NH4(+). Functionally, catalyzes the hydrolytic deamination of adenosine and 2-deoxyadenosine. This Escherichia coli O157:H7 protein is Adenosine deaminase.